The following is a 276-amino-acid chain: Diaminopimelate epimerase (276 aa).

3 residues coordinate substrate: Asn13, Gln46, and Asn66. Cys75 (proton donor) is an active-site residue. Substrate is bound by residues 76–77 (GN), Asn159, Asn192, and 210–211 (ER). The active-site Proton acceptor is Cys219. 220–221 (GT) provides a ligand contact to substrate.

This sequence belongs to the diaminopimelate epimerase family. As to quaternary structure, homodimer.

It is found in the cytoplasm. It catalyses the reaction (2S,6S)-2,6-diaminopimelate = meso-2,6-diaminopimelate. The protein operates within amino-acid biosynthesis; L-lysine biosynthesis via DAP pathway; DL-2,6-diaminopimelate from LL-2,6-diaminopimelate: step 1/1. Catalyzes the stereoinversion of LL-2,6-diaminopimelate (L,L-DAP) to meso-diaminopimelate (meso-DAP), a precursor of L-lysine and an essential component of the bacterial peptidoglycan. In Chromobacterium violaceum (strain ATCC 12472 / DSM 30191 / JCM 1249 / CCUG 213 / NBRC 12614 / NCIMB 9131 / NCTC 9757 / MK), this protein is Diaminopimelate epimerase.